The sequence spans 146 residues: Large ribosomal subunit protein uL15 (146 aa).

Positions 1–13 (MKLHELKPAEGSR) are enriched in basic and acidic residues. The interval 1–65 (MKLHELKPAE…PLYRRLPKRG (65 aa)) is disordered. Composition is skewed to gly residues over residues 21 to 31 (RGIGSGNGKTA) and 42 to 52 (SGGGVRPGFEG).

It belongs to the universal ribosomal protein uL15 family. As to quaternary structure, part of the 50S ribosomal subunit.

Binds to the 23S rRNA. This chain is Large ribosomal subunit protein uL15, found in Halalkalibacterium halodurans (strain ATCC BAA-125 / DSM 18197 / FERM 7344 / JCM 9153 / C-125) (Bacillus halodurans).